The chain runs to 53 residues: Large ribosomal subunit protein bL33 (53 aa).

The protein belongs to the bacterial ribosomal protein bL33 family.

This is Large ribosomal subunit protein bL33 from Blochmanniella floridana.